Here is a 124-residue protein sequence, read N- to C-terminus: Ragulator complex protein LAMTOR2 homolog (124 aa).

The protein belongs to the GAMAD family. Part of the Ragulator complex.

Functionally, regulator of the TOR pathway, a signaling cascade that promotes cell growth in response to growth factors, energy levels, and amino acids. May activate the TOR signaling cascade in response to amino acids. This is Ragulator complex protein LAMTOR2 homolog from Caenorhabditis elegans.